The sequence spans 425 residues: MSVLIIDGGIPLKGKVTAQGCKNSALAILAAAALCEDRVYLTNVPDIGDVKTMMSILRSLGYKVTWGSGLTIKPGVIKNYDLTHTGAGSIRGSLLFLGALLGRLGKVVLPMPGGCNIGTRPIDLHLKGLSLMGASLDIQGGNIVGEAPSGLKGAYVYLDFPSVGATENIMIAGALASGETTIENAAQDQQVVELGKFLMACGVKIHGLGTKVIRIKGKKEIGGVTFRISGDSIEAGTYAIAAAATRGSITVDGVDVTFLRPLLFKLQEAGIEVVVTNGHEVTVLPSPRPKGITIKTMPFPGFPTDLQPLMMSLLATAEGRSVITETVYDGRMGHVSELWKMGANIEVEGNTAIITGVEKLTGAPVVANNLRAGAALVVAGLSAEGRSVVYGMEHVMRGYSNIHQKLRALDAKVELVSDEEAVNIA.

Position 22 to 23 (22 to 23 (KN)) interacts with phosphoenolpyruvate. Arginine 91 contributes to the UDP-N-acetyl-alpha-D-glucosamine binding site. Residue cysteine 115 is the Proton donor of the active site. Cysteine 115 is modified (2-(S-cysteinyl)pyruvic acid O-phosphothioketal). UDP-N-acetyl-alpha-D-glucosamine-binding positions include 120–124 (RPIDL), aspartate 305, and valine 327.

The protein belongs to the EPSP synthase family. MurA subfamily.

It is found in the cytoplasm. The enzyme catalyses phosphoenolpyruvate + UDP-N-acetyl-alpha-D-glucosamine = UDP-N-acetyl-3-O-(1-carboxyvinyl)-alpha-D-glucosamine + phosphate. Its pathway is cell wall biogenesis; peptidoglycan biosynthesis. Its function is as follows. Cell wall formation. Adds enolpyruvyl to UDP-N-acetylglucosamine. The polypeptide is UDP-N-acetylglucosamine 1-carboxyvinyltransferase (Coprothermobacter proteolyticus (strain ATCC 35245 / DSM 5265 / OCM 4 / BT)).